We begin with the raw amino-acid sequence, 310 residues long: MRFRGLDLNLLVALDALMTERQLTAAARRINLSQPAMSAAIARLRNYFHDDLFVMQGRELILTPRAEALAPAVRDTLLHIQLSVIAWDPIKPAESDRRFRIILSDFMTLIFMEKVIKRIAREAPRVTFELLPLDDDPDELLRRGDVDFLILPDLLMPNIHPKAKLFDETLVCVGCPMNKQLEDRLSMEKFMSMGHVAAKFGRLMKPSVEQWLLLEHGFRRRIELVVPGFTLIPPLLVGTDRIATLPMRLVKHFEQTIPLKIVEHPLPPLHFPLAVQWPALHNTDPGNIWMREIMFDEASRMEASSETSAV.

Positions 6-63 (LDLNLLVALDALMTERQLTAAARRINLSQPAMSAAIARLRNYFHDDLFVMQGRELILT) constitute an HTH lysR-type domain. The segment at residues 23–42 (LTAAARRINLSQPAMSAAIA) is a DNA-binding region (H-T-H motif).

This sequence belongs to the LysR transcriptional regulatory family.

In terms of biological role, nodD regulates the expression of the nodABCFE genes which encode other nodulation proteins. NodD is also a negative regulator of its own expression. Binds flavonoids as inducers. In Neorhizobium galegae (Rhizobium galegae), this protein is Nodulation protein D 1 (nodD1).